A 369-amino-acid polypeptide reads, in one-letter code: RNA pseudouridine synthase 5 (369 aa).

Residues 47-104 (APLLGWIQRIQNGQIQIDGEVVKDPNTLLRSGSKLVYSRLPWKEPDTPYSLEVLYEDD) enclose the S4 RNA-binding domain.

This sequence belongs to the pseudouridine synthase RluA family.

It carries out the reaction a uridine in RNA = a pseudouridine in RNA. This chain is RNA pseudouridine synthase 5, found in Arabidopsis thaliana (Mouse-ear cress).